The following is a 426-amino-acid chain: Histidine--tRNA ligase 1 (426 aa).

It belongs to the class-II aminoacyl-tRNA synthetase family. As to quaternary structure, homodimer.

Its subcellular location is the cytoplasm. The catalysed reaction is tRNA(His) + L-histidine + ATP = L-histidyl-tRNA(His) + AMP + diphosphate + H(+). The chain is Histidine--tRNA ligase 1 from Shouchella clausii (strain KSM-K16) (Alkalihalobacillus clausii).